A 171-amino-acid polypeptide reads, in one-letter code: Lipoprotein signal peptidase (171 aa).

3 consecutive transmembrane segments (helical) span residues 7-27 (GLLA…GLYF), 64-84 (IGRW…GLWM), and 88-108 (TSRL…GNAI). Active-site residues include Asp-118 and Asp-136. A helical membrane pass occupies residues 128-148 (SWYVFNVADAAIVAGVIGLIL).

This sequence belongs to the peptidase A8 family.

The protein localises to the cell inner membrane. The enzyme catalyses Release of signal peptides from bacterial membrane prolipoproteins. Hydrolyzes -Xaa-Yaa-Zaa-|-(S,diacylglyceryl)Cys-, in which Xaa is hydrophobic (preferably Leu), and Yaa (Ala or Ser) and Zaa (Gly or Ala) have small, neutral side chains.. It participates in protein modification; lipoprotein biosynthesis (signal peptide cleavage). Functionally, this protein specifically catalyzes the removal of signal peptides from prolipoproteins. The sequence is that of Lipoprotein signal peptidase from Methylobacterium radiotolerans (strain ATCC 27329 / DSM 1819 / JCM 2831 / NBRC 15690 / NCIMB 10815 / 0-1).